Reading from the N-terminus, the 474-residue chain is Stabilizer of axonemal microtubules 1 (474 aa).

12 mn regions span residues 30–64 (KPCL…KGPI), 65–97 (PMEG…PSEE), 98–131 (NMDL…PCSD), 132–165 (KMEC…PASV), 166–199 (RFDN…LCNI), 200–232 (PLED…PCEI), 233–266 (PFES…GLDM), 267–299 (PFCN…PPED), 300–332 (RMDL…KKCG), 333–366 (RFEG…LPTE), 367–400 (PLDC…RGNV), and 401–434 (PVES…TFEE). The tract at residues 446–474 (VSQAGSQQSSHLSVDDSENPNQRELEVLA) is disordered. Positions 448-457 (QAGSQQSSHL) are enriched in polar residues.

Belongs to the FAM154 family. Associates with microtubules via the Mn regions. In terms of tissue distribution, widely expressed, with highest levels in testis. Expressed in mature spermatozoa (at protein level).

It is found in the cytoplasm. It localises to the cytoskeleton. The protein localises to the microtubule organizing center. The protein resides in the centrosome. Its subcellular location is the centriole. It is found in the cilium basal body. It localises to the cilium axoneme. The protein localises to the flagellum axoneme. Functionally, may play a role in the regulation of cilium length. Stabilizes microtubules at low temperature. This is Stabilizer of axonemal microtubules 1 (SAXO1) from Homo sapiens (Human).